Here is a 267-residue protein sequence, read N- to C-terminus: Tetrahydromethanopterin S-methyltransferase subunit C (267 aa).

A run of 8 helical transmembrane segments spans residues 18 to 38 (LMAL…VNPV), 39 to 59 (IGPV…ADAI), 76 to 96 (YMSV…VFVV), 99 to 119 (IAVP…VAVL), 138 to 158 (ISGA…GSYT), 163 to 183 (LTSV…TMAI), 209 to 229 (FISM…WWLV), and 230 to 250 (SLIG…ASFE).

The protein belongs to the MtrC family. As to quaternary structure, the complex is composed of 8 subunits; MtrA, MtrB, MtrC, MtrD, MtrE, MtrF, MtrG and MtrH.

The protein resides in the cell membrane. The enzyme catalyses 5-methyl-5,6,7,8-tetrahydromethanopterin + coenzyme M + 2 Na(+)(in) = 5,6,7,8-tetrahydromethanopterin + methyl-coenzyme M + 2 Na(+)(out). Its pathway is one-carbon metabolism; methanogenesis from CO(2); methyl-coenzyme M from 5,10-methylene-5,6,7,8-tetrahydromethanopterin: step 2/2. Its function is as follows. Part of a complex that catalyzes the formation of methyl-coenzyme M and tetrahydromethanopterin from coenzyme M and methyl-tetrahydromethanopterin. This is an energy-conserving, sodium-ion translocating step. The sequence is that of Tetrahydromethanopterin S-methyltransferase subunit C from Methanothermobacter marburgensis (strain ATCC BAA-927 / DSM 2133 / JCM 14651 / NBRC 100331 / OCM 82 / Marburg) (Methanobacterium thermoautotrophicum).